The following is a 483-amino-acid chain: Arginine/agmatine antiporter (483 aa).

12 helical membrane passes run 11–33 (ILGT…IFSL), 48–70 (LAWM…LSII), 90–112 (VGFT…YAVI), 127–149 (GGNT…YIVL), 156–178 (SFVN…LITA), 209–228 (TMLV…VISG), 241–263 (ILGF…GSLF), 293–315 (TGLL…EIPY), 335–357 (APSF…VYFS), 367–389 (ITGV…FSLS), 415–435 (LWLI…LLAL), and 458–477 (EILK…FLFS).

It belongs to the amino acid-polyamine-organocation (APC) superfamily. Basic amino acid/polyamine antiporter (APA) (TC 2.A.3.2) family.

The protein localises to the cell inner membrane. Functionally, catalyzes the exchange of L-arginine for agmatine. The arginine uptake by the bacterium in the macrophage may be a virulence factor against the host innate immune response. The protein is Arginine/agmatine antiporter (aaxC) of Chlamydia trachomatis serovar L2 (strain ATCC VR-902B / DSM 19102 / 434/Bu).